Reading from the N-terminus, the 715-residue chain is Polyribonucleotide nucleotidyltransferase (715 aa).

Residues D487 and D493 each coordinate Mg(2+). Residues 554–613 (PRLYTFKINPEKIRDVIGKGGAVIRALTEETGTTIDIQDDGTITIAATSGEAAAAARSRI) enclose the KH domain. Residues 623–691 (GKIYEGTVLK…DRGRVKLSMK (69 aa)) form the S1 motif domain.

Belongs to the polyribonucleotide nucleotidyltransferase family. It depends on Mg(2+) as a cofactor.

It localises to the cytoplasm. It catalyses the reaction RNA(n+1) + phosphate = RNA(n) + a ribonucleoside 5'-diphosphate. Its function is as follows. Involved in mRNA degradation. Catalyzes the phosphorolysis of single-stranded polyribonucleotides processively in the 3'- to 5'-direction. The polypeptide is Polyribonucleotide nucleotidyltransferase (Dechloromonas aromatica (strain RCB)).